The chain runs to 631 residues: uncharacterized protein (631 aa).

The N-terminal stretch at 1–20 is a signal peptide; the sequence is MVRFVSILSLFGCAATLVTA. Topologically, residues 21–105 are lumenal; that stretch reads HDDMDMDMDM…AGNRSALRYH (85 aa). Residues asparagine 87 and asparagine 98 are each glycosylated (N-linked (GlcNAc...) asparagine). Residues 106-126 form a helical membrane-spanning segment; that stretch reads IITLLLVAFVLYPVSLALSAA. The Cytoplasmic segment spans residues 127 to 131; it reads RSRWY. A helical transmembrane segment spans residues 132–152; that stretch reads LPLLFVNLCICISSVMALSVF. Topologically, residues 153-170 are lumenal; that stretch reads KNTFPEEDWYAHNIYGTT. A helical transmembrane segment spans residues 171 to 191; that stretch reads SVLLLVFMLVHFFAAVLSVPV. Residues 192–322 are Cytoplasmic-facing; it reads SLASKKEYRP…LSCVANVVFH (131 aa). The interval 216–274 is disordered; the sequence is MVNSARGSPSPSSNRDTLFSLSSDTTTATATNNNKRRRAEGEDEGDNTSNHDTLRDEDY. Position 219 is a phosphoserine (serine 219). A compositionally biased stretch (polar residues) spans 220 to 239; sequence ARGSPSPSSNRDTLFSLSSD. Residue lysine 250 forms a Glycyl lysine isopeptide (Lys-Gly) (interchain with G-Cter in ubiquitin) linkage. The helical transmembrane segment at 323–343 threads the bilayer; sequence MLTYPLFMYIFVDLIIGFAVG. The Lumenal segment spans residues 344 to 351; the sequence is NLLGKGIR. A helical transmembrane segment spans residues 352-372; the sequence is IFNLLAHWIKGGVFFTLGVVS. At 373 to 407 the chain is on the cytoplasmic side; it reads LARYCGFAAKYGWAWNNISFTSQLTQTRSSNLLFR. A helical membrane pass occupies residues 408-428; sequence FAPAGTFTMEFVESFLIFFYG. Over 429–451 the chain is Lumenal; the sequence is STNIFLEHLAGNGGAWTAKDLQH. The helical transmembrane segment at 452 to 472 threads the bilayer; it reads VSIAFMFIGTGLCGLLTEYKL. Residues 473 to 529 lie on the Cytoplasmic side of the membrane; that stretch reads NHWRFEHARKRPQTDVVAATPGYSPNPFPAFTIFWTGILMSQHAQSSQFSTTIHTQW. Residues 530–550 form a helical membrane-spanning segment; it reads GYLLSYGSFFRLLTFLILFLV. Over 551–598 the chain is Lumenal; it reads PNTNSAASKPFTELITSFCLLCGGLVFMESTDQSIEAMEYRGFTPMFT. The chain crosses the membrane as a helical span at residues 599–619; the sequence is FNLSVGFVSLLMAWEMILFIW. Topologically, residues 620-631 are cytoplasmic; it reads KDWLIKTRKTSL.

This sequence to S.pombe SpBC3B8.06.

It is found in the membrane. This is an uncharacterized protein from Saccharomyces cerevisiae (strain ATCC 204508 / S288c) (Baker's yeast).